The primary structure comprises 122 residues: Large ribosomal subunit protein bL12 (122 aa).

The protein belongs to the bacterial ribosomal protein bL12 family. In terms of assembly, homodimer. Part of the ribosomal stalk of the 50S ribosomal subunit. Forms a multimeric L10(L12)X complex, where L10 forms an elongated spine to which 2 to 4 L12 dimers bind in a sequential fashion. Binds GTP-bound translation factors.

Its function is as follows. Forms part of the ribosomal stalk which helps the ribosome interact with GTP-bound translation factors. Is thus essential for accurate translation. This is Large ribosomal subunit protein bL12 from Deinococcus geothermalis (strain DSM 11300 / CIP 105573 / AG-3a).